Reading from the N-terminus, the 341-residue chain is Large ribosomal subunit protein uL3 (341 aa).

Disordered stretches follow at residues 1 to 31 (MGHR…SPRS) and 234 to 261 (HRKG…GQMG).

The protein belongs to the universal ribosomal protein uL3 family. As to quaternary structure, part of the 50S ribosomal subunit. Forms a cluster with proteins L14 and L24e.

One of the primary rRNA binding proteins, it binds directly near the 3'-end of the 23S rRNA, where it nucleates assembly of the 50S subunit. The sequence is that of Large ribosomal subunit protein uL3 from Metallosphaera sedula (strain ATCC 51363 / DSM 5348 / JCM 9185 / NBRC 15509 / TH2).